The sequence spans 514 residues: Probable endopolygalacturonase D (514 aa).

The N-terminal stretch at 1 to 16 (MKRCALLTPLLPLALA) is a signal peptide. Residues 134 to 166 (IKSSSPGPSSSFAAAATTEAPTSTRASPYTPYT) form a disordered region. Residues 136-166 (SSSPGPSSSFAAAATTEAPTSTRASPYTPYT) are compositionally biased toward low complexity. Cys173 and Cys188 form a disulfide bridge. A glycan (N-linked (GlcNAc...) asparagine) is linked at Asn240. PbH1 repeat units follow at residues 280–302 (VYNS…DIEN), 303–341 (TESL…DIKS), 342–363 (STDL…AITS), 364–384 (GTNI…SIGS), 393–414 (VDGV…RIKT), 422–444 (VSNI…VVQQ), and 456–500 (SNGV…SITG). Positions 312–335 (TLDNSAGDEPNDSSDGDPAAHNSD) are disordered. N-linked (GlcNAc...) asparagine glycosylation occurs at Asn322. The Proton donor role is filled by Asp356. Residues Cys358 and Cys374 are joined by a disulfide bond. A glycan (N-linked (GlcNAc...) asparagine) is linked at Asn366. His378 is an active-site residue. Asn429 carries an N-linked (GlcNAc...) asparagine glycan. Cys483 and Cys488 are oxidised to a cystine. N-linked (GlcNAc...) asparagine glycosylation is present at Asn490. Cys506 and Cys513 are disulfide-bonded.

It belongs to the glycosyl hydrolase 28 family.

The protein resides in the secreted. The catalysed reaction is (1,4-alpha-D-galacturonosyl)n+m + H2O = (1,4-alpha-D-galacturonosyl)n + (1,4-alpha-D-galacturonosyl)m.. Functionally, involved in maceration and soft-rotting of plant tissue. Hydrolyzes the 1,4-alpha glycosidic bonds of de-esterified pectate in the smooth region of the plant cell wall. The protein is Probable endopolygalacturonase D (pgaD) of Emericella nidulans (strain FGSC A4 / ATCC 38163 / CBS 112.46 / NRRL 194 / M139) (Aspergillus nidulans).